The following is a 166-amino-acid chain: Putative transcriptional regulatory protein for hcr operon (166 aa).

Positions 1 to 155 constitute an HTH marR-type domain; that stretch reads MRKHRGKPAN…LIGLLKRLYR (155 aa).

May be involved in the regulation of genes for 4-hydroxybenzoyl-CoA reductase. The sequence is that of Putative transcriptional regulatory protein for hcr operon from Thauera aromatica.